We begin with the raw amino-acid sequence, 224 residues long: MRVSGVLRLLALIFAIVTTWMFIRSYMSFSMKTIRLPRWLAASPTKEIQVKKYKCGLIKPCPANYFAFKICSGAANVVGPTMCFEDRMIMSPVKNNVGRGLNIALVNGTTGAVLGQKAFDMYSGDVMHLVKFLKEIPGGALVLVASYDDPGTKMNDESRKLFSDLGSSYAKQLGFRDSWVFIGAKDLRGKSPFEQFLKNSPDTNKYEGWPELLEMEGCMPPKPF.

Positions 1–25 (MRVSGVLRLLALIFAIVTTWMFIRS) are cleaved as a signal peptide. Cystine bridges form between Cys-55-Cys-83 and Cys-61-Cys-218. The GG-type lectin domain maps to 64 to 222 (NYFAFKICSG…LEMEGCMPPK (159 aa)). Residue Asn-107 is glycosylated (N-linked (GlcNAc...) asparagine).

The protein belongs to the FAM3 family. In terms of tissue distribution, abundantly expressed in placenta and weakly expressed in small intestine.

Its subcellular location is the secreted. In Homo sapiens (Human), this protein is Protein FAM3D (FAM3D).